Reading from the N-terminus, the 334-residue chain is Putative heme-binding peroxidase (334 aa).

The Proton acceptor role is filled by His-40. Heme b is bound at residue His-169. The active-site Tryptophan radical intermediate is Trp-185.

It belongs to the peroxidase family. Cytochrome c peroxidase subfamily. It depends on heme b as a cofactor.

Functionally, destroys radicals which are normally produced within the cells and which are toxic to biological systems. This chain is Putative heme-binding peroxidase, found in Cryptococcus neoformans var. neoformans serotype D (strain JEC21 / ATCC MYA-565) (Filobasidiella neoformans).